Consider the following 84-residue polypeptide: Large ribosomal subunit protein bL31B (84 aa).

This sequence belongs to the bacterial ribosomal protein bL31 family. Type B subfamily. As to quaternary structure, part of the 50S ribosomal subunit.

This is Large ribosomal subunit protein bL31B from Bacteroides thetaiotaomicron (strain ATCC 29148 / DSM 2079 / JCM 5827 / CCUG 10774 / NCTC 10582 / VPI-5482 / E50).